Here is a 55-residue protein sequence, read N- to C-terminus: Photosystem II reaction center X protein (55 aa).

A helical membrane pass occupies residues 24–44; the sequence is IGSFLAAAALIVVPAASFLLW.

It belongs to the PsbX family. Type 2 subfamily. In terms of assembly, PSII consists of a core antenna complex that captures photons, and an electron transfer chain that converts photonic excitation into a charge separation. PSII forms dimeric complexes.

The protein localises to the cellular thylakoid membrane. In terms of biological role, involved in the binding and/or turnover of quinones at the Q(B) site of Photosystem II. This Prochlorococcus marinus (strain SARG / CCMP1375 / SS120) protein is Photosystem II reaction center X protein.